The sequence spans 163 residues: Neurotrophin-3 (163 aa).

The N-terminal stretch at 1–3 (IQS) is a signal peptide. Residues 4–119 (TSMDQGILTE…VLNRTSRRKR (116 aa)) constitute a propeptide that is removed on maturation. Residue Asn-112 is glycosylated (N-linked (GlcNAc...) asparagine). Residues 113 to 133 (RTSRRKREGKSHRGEYSVCDS) form a disordered region. A compositionally biased stretch (basic and acidic residues) spans 123-133 (SHRGEYSVCDS).

It belongs to the NGF-beta family.

The protein localises to the secreted. In terms of biological role, seems to promote the survival of visceral and proprioceptive sensory neurons. The polypeptide is Neurotrophin-3 (NTF3) (Charina bottae (Northern rubber boa)).